The chain runs to 442 residues: MHAVPTHAASPERLPFYRQLYFQVVVAIVAGVLLGHFEPQYAEQFKPLGDAFIKLVKMIIAPVIFLTIVTGIAGMTHLRTVGRVFLKAMAYFLFFSTLALVVGMVVAHVVQPGAGMNINPADLDQAAVKGYVAKSHELTLTGFAMDIIPKTLVSPFVGDNILQVLFVAVLFGISLAMVGDAGKPVLNFLEALTAPVFKLVGILMKAAPLGAFGAIAFTIGKFGLGSLVNLAWLVGSFYITSLLFVVVVLGFVARLCGFSVLKLARYLKAELLLVLGTSSSESALPSLMQKMERAGCGKSVVGLVVPTGYSFNLDGTNIYMTLAALFIAQATNTHLTLGHEIALLLVAMLSSKGAAGVTGAGFITLAATLAVVPEVPVAGMALILGVDRFMSECRSLTNFMGNAVATVVVSRWENELDYSKLNAALDGEPVQALPAEAAAVKA.

8 helical membrane-spanning segments follow: residues 19-39 (QLYF…HFEP), 55-75 (LVKM…IAGM), 90-110 (AYFL…AHVV), 161-181 (ILQV…VGDA), 199-219 (LVGI…AFTI), 232-252 (WLVG…LGFV), 318-338 (IYMT…LTLG), and 366-386 (AATL…ILGV).

It belongs to the dicarboxylate/amino acid:cation symporter (DAACS) (TC 2.A.23) family.

The protein resides in the cell inner membrane. Responsible for the transport of dicarboxylates such as succinate, fumarate, and malate from the periplasm across the membrane. This chain is C4-dicarboxylate transport protein, found in Delftia acidovorans (strain DSM 14801 / SPH-1).